Here is a 192-residue protein sequence, read N- to C-terminus: Fe/S biogenesis protein NfuA (192 aa).

2 residues coordinate [4Fe-4S] cluster: Cys-149 and Cys-152.

Belongs to the NfuA family. Homodimer. [4Fe-4S] cluster serves as cofactor.

Its function is as follows. Involved in iron-sulfur cluster biogenesis. Binds a 4Fe-4S cluster, can transfer this cluster to apoproteins, and thereby intervenes in the maturation of Fe/S proteins. Could also act as a scaffold/chaperone for damaged Fe/S proteins. In Shewanella amazonensis (strain ATCC BAA-1098 / SB2B), this protein is Fe/S biogenesis protein NfuA.